The sequence spans 207 residues: ATP-dependent Clp protease proteolytic subunit (207 aa).

Ser-111 serves as the catalytic Nucleophile. Residue His-136 is part of the active site.

It belongs to the peptidase S14 family. In terms of assembly, fourteen ClpP subunits assemble into 2 heptameric rings which stack back to back to give a disk-like structure with a central cavity, resembling the structure of eukaryotic proteasomes. Component of the ClpAP and ClpXP complexes.

Its subcellular location is the cytoplasm. It catalyses the reaction Hydrolysis of proteins to small peptides in the presence of ATP and magnesium. alpha-casein is the usual test substrate. In the absence of ATP, only oligopeptides shorter than five residues are hydrolyzed (such as succinyl-Leu-Tyr-|-NHMec, and Leu-Tyr-Leu-|-Tyr-Trp, in which cleavage of the -Tyr-|-Leu- and -Tyr-|-Trp bonds also occurs).. Cleaves peptides in various proteins in a process that requires ATP hydrolysis. Has a chymotrypsin-like activity. Plays a major role in the degradation of misfolded proteins. This chain is ATP-dependent Clp protease proteolytic subunit, found in Escherichia coli O139:H28 (strain E24377A / ETEC).